We begin with the raw amino-acid sequence, 743 residues long: 1,4-alpha-glucan branching enzyme GlgB (743 aa).

Asp423 functions as the Nucleophile in the catalytic mechanism. Catalysis depends on Glu476, which acts as the Proton donor.

Belongs to the glycosyl hydrolase 13 family. GlgB subfamily. As to quaternary structure, monomer.

It catalyses the reaction Transfers a segment of a (1-&gt;4)-alpha-D-glucan chain to a primary hydroxy group in a similar glucan chain.. Its pathway is glycan biosynthesis; glycogen biosynthesis. Catalyzes the formation of the alpha-1,6-glucosidic linkages in glycogen by scission of a 1,4-alpha-linked oligosaccharide from growing alpha-1,4-glucan chains and the subsequent attachment of the oligosaccharide to the alpha-1,6 position. The protein is 1,4-alpha-glucan branching enzyme GlgB of Pseudomonas fluorescens (strain Pf0-1).